The chain runs to 944 residues: UvrABC system protein A (944 aa).

33–40 (GLSGSGKS) contacts ATP. A C4-type zinc finger spans residues 252-279 (CPICGFSIGELEPRMFSFNSPFGACPTC). ABC transporter domains follow at residues 309-587 (WEPT…KKSL) and 607-935 (ITDR…QYLK). Residue 639–646 (GVSGSGKS) coordinates ATP. A C4-type zinc finger spans residues 738–764 (CEACKGDGIIKIEMHFLPDVYVPCEVC).

The protein belongs to the ABC transporter superfamily. UvrA family. As to quaternary structure, forms a heterotetramer with UvrB during the search for lesions.

The protein localises to the cytoplasm. In terms of biological role, the UvrABC repair system catalyzes the recognition and processing of DNA lesions. UvrA is an ATPase and a DNA-binding protein. A damage recognition complex composed of 2 UvrA and 2 UvrB subunits scans DNA for abnormalities. When the presence of a lesion has been verified by UvrB, the UvrA molecules dissociate. The chain is UvrABC system protein A from Staphylococcus epidermidis (strain ATCC 12228 / FDA PCI 1200).